Consider the following 423-residue polypeptide: Inactive autotransporter heptosyltransferase BimC (423 aa).

Polar residues predominate over residues 1 to 10; that stretch reads MPKVTFSGSA. Positions 1-49 are disordered; sequence MPKVTFSGSAPTLGVHAPPALDPRQPASPPPAASNGTHARGFSPPADMP. Residues cysteine 371, cysteine 374, cysteine 390, and cysteine 402 each contribute to the Fe(3+) site.

This sequence belongs to the glycosyltransferase 9 family. Homotrimer or homotetramer. The cofactor is Fe(3+).

It localises to the cell inner membrane. Its subcellular location is the cytoplasm. In terms of biological role, iron-binding protein which is required for the asymmetric polar distribution of the autotransporter BimA on the bacterial surface prior to its translocation into bacterial periplasm. Lacks heptosyltransferase activity. The polypeptide is Inactive autotransporter heptosyltransferase BimC (Burkholderia thailandensis (strain ATCC 700388 / DSM 13276 / CCUG 48851 / CIP 106301 / E264)).